The primary structure comprises 467 residues: UDP-N-acetylmuramoylalanine--D-glutamate ligase (467 aa).

115–121 (GTDGKTT) contacts ATP.

The protein belongs to the MurCDEF family.

It is found in the cytoplasm. The catalysed reaction is UDP-N-acetyl-alpha-D-muramoyl-L-alanine + D-glutamate + ATP = UDP-N-acetyl-alpha-D-muramoyl-L-alanyl-D-glutamate + ADP + phosphate + H(+). It functions in the pathway cell wall biogenesis; peptidoglycan biosynthesis. Functionally, cell wall formation. Catalyzes the addition of glutamate to the nucleotide precursor UDP-N-acetylmuramoyl-L-alanine (UMA). The polypeptide is UDP-N-acetylmuramoylalanine--D-glutamate ligase (Chlorobaculum parvum (strain DSM 263 / NCIMB 8327) (Chlorobium vibrioforme subsp. thiosulfatophilum)).